Consider the following 146-residue polypeptide: Hemoglobin subunit beta (146 aa).

Residue valine 1 is modified to N-acetylvaline. Residues 2–146 form the Globin domain; that stretch reads QLSGEEKAAV…VANALAHKYH (145 aa). Serine 44 carries the phosphoserine modification. Lysine 59 is modified (N6-acetyllysine). Histidine 63 provides a ligand contact to heme b. Lysine 82 is modified (N6-acetyllysine). Residue histidine 92 coordinates heme b. Cysteine 93 carries the S-nitrosocysteine modification. Residue lysine 144 is modified to N6-acetyllysine.

This sequence belongs to the globin family. Heterotetramer of two alpha chains and two beta chains. In terms of tissue distribution, red blood cells.

Functionally, involved in oxygen transport from the lung to the various peripheral tissues. The polypeptide is Hemoglobin subunit beta (HBB) (Equus caballus (Horse)).